A 103-amino-acid chain; its full sequence is Small ribosomal subunit protein bS6c (103 aa).

The protein belongs to the bacterial ribosomal protein bS6 family.

The protein resides in the plastid. It localises to the chloroplast. Functionally, binds together with bS18 to 16S ribosomal RNA. This Cyanidium caldarium (Red alga) protein is Small ribosomal subunit protein bS6c (rps6).